Consider the following 307-residue polypeptide: Aspartate carbamoyltransferase catalytic subunit (307 aa).

Residues Arg54 and Thr55 each contribute to the carbamoyl phosphate site. An L-aspartate-binding site is contributed by Lys83. Residues Arg104, His132, and Gln135 each coordinate carbamoyl phosphate. L-aspartate-binding residues include Arg165 and Arg228. The carbamoyl phosphate site is built by Leu267 and Pro268.

It belongs to the aspartate/ornithine carbamoyltransferase superfamily. ATCase family. Heterododecamer (2C3:3R2) of six catalytic PyrB chains organized as two trimers (C3), and six regulatory PyrI chains organized as three dimers (R2).

The catalysed reaction is carbamoyl phosphate + L-aspartate = N-carbamoyl-L-aspartate + phosphate + H(+). The protein operates within pyrimidine metabolism; UMP biosynthesis via de novo pathway; (S)-dihydroorotate from bicarbonate: step 2/3. Its function is as follows. Catalyzes the condensation of carbamoyl phosphate and aspartate to form carbamoyl aspartate and inorganic phosphate, the committed step in the de novo pyrimidine nucleotide biosynthesis pathway. This is Aspartate carbamoyltransferase catalytic subunit from Clostridium perfringens (strain SM101 / Type A).